A 148-amino-acid polypeptide reads, in one-letter code: Macrodomain Ter protein (148 aa).

It belongs to the MatP family. Homodimer.

It is found in the cytoplasm. In terms of biological role, required for spatial organization of the terminus region of the chromosome (Ter macrodomain) during the cell cycle. Prevents early segregation of duplicated Ter macrodomains during cell division. Binds specifically to matS, which is a 13 bp signature motif repeated within the Ter macrodomain. In Haemophilus influenzae (strain PittGG), this protein is Macrodomain Ter protein.